Consider the following 602-residue polypeptide: Aspartate--tRNA(Asp/Asn) ligase (602 aa).

L-aspartate is bound at residue E175. Positions 199–202 are aspartate; sequence QIFK. Residue R221 coordinates L-aspartate. Residues 221 to 223 and Q230 contribute to the ATP site; that span reads RDE. Residue H458 participates in L-aspartate binding. E492 is an ATP binding site. Position 499 (R499) interacts with L-aspartate. An ATP-binding site is contributed by 544–547; the sequence is GLDR.

Belongs to the class-II aminoacyl-tRNA synthetase family. Type 1 subfamily. Homodimer.

The protein resides in the cytoplasm. It carries out the reaction tRNA(Asx) + L-aspartate + ATP = L-aspartyl-tRNA(Asx) + AMP + diphosphate. Functionally, aspartyl-tRNA synthetase with relaxed tRNA specificity since it is able to aspartylate not only its cognate tRNA(Asp) but also tRNA(Asn). Reaction proceeds in two steps: L-aspartate is first activated by ATP to form Asp-AMP and then transferred to the acceptor end of tRNA(Asp/Asn). This is Aspartate--tRNA(Asp/Asn) ligase from Cupriavidus taiwanensis (strain DSM 17343 / BCRC 17206 / CCUG 44338 / CIP 107171 / LMG 19424 / R1) (Ralstonia taiwanensis (strain LMG 19424)).